A 306-amino-acid chain; its full sequence is Protein STPG3 (306 aa).

Residues 210–230 (CSYTPLLPTSKPSGEKRPSPN) form a disordered region.

The sequence is that of Protein STPG3 from Mus musculus (Mouse).